The chain runs to 431 residues: Gamma-glutamyl phosphate reductase (431 aa).

This sequence belongs to the gamma-glutamyl phosphate reductase family.

It is found in the cytoplasm. It catalyses the reaction L-glutamate 5-semialdehyde + phosphate + NADP(+) = L-glutamyl 5-phosphate + NADPH + H(+). It functions in the pathway amino-acid biosynthesis; L-proline biosynthesis; L-glutamate 5-semialdehyde from L-glutamate: step 2/2. Its function is as follows. Catalyzes the NADPH-dependent reduction of L-glutamate 5-phosphate into L-glutamate 5-semialdehyde and phosphate. The product spontaneously undergoes cyclization to form 1-pyrroline-5-carboxylate. This is Gamma-glutamyl phosphate reductase from Acetivibrio thermocellus (strain ATCC 27405 / DSM 1237 / JCM 9322 / NBRC 103400 / NCIMB 10682 / NRRL B-4536 / VPI 7372) (Clostridium thermocellum).